The chain runs to 266 residues: Putative carbamate hydrolase RutD (266 aa).

Positions 14-115 constitute an AB hydrolase-1 domain; sequence PVVVLISGLG…TVLVSVNGWL (102 aa).

This sequence belongs to the AB hydrolase superfamily. Hydrolase RutD family.

It carries out the reaction carbamate + 2 H(+) = NH4(+) + CO2. Involved in pyrimidine catabolism. May facilitate the hydrolysis of carbamate, a reaction that can also occur spontaneously. The sequence is that of Putative carbamate hydrolase RutD from Escherichia coli O9:H4 (strain HS).